Consider the following 227-residue polypeptide: Glutathione S-transferase U13 (227 aa).

Positions Asp5 to Pro86 constitute a GST N-terminal domain. Glutathione contacts are provided by residues Ser15–Pro16, Glu43–Lys44, Lys57–Val58, and Glu70–Ser71. In terms of domain architecture, GST C-terminal spans Asp92 to Phe224. Thr158 is modified (phosphothreonine).

The protein belongs to the GST superfamily. Tau family.

Its subcellular location is the cytoplasm. It localises to the cytosol. The enzyme catalyses RX + glutathione = an S-substituted glutathione + a halide anion + H(+). Functionally, in vitro, possesses glutathione S-transferase activity toward 1-chloro-2,4-dinitrobenzene (CDNB) and benzyl isothiocyanate (BITC). May be involved in the conjugation of reduced glutathione to a wide number of exogenous and endogenous hydrophobic electrophiles and have a detoxification role against certain herbicides. The protein is Glutathione S-transferase U13 (GSTU13) of Arabidopsis thaliana (Mouse-ear cress).